A 238-amino-acid chain; its full sequence is Tetraspanin-8 (238 aa).

The Cytoplasmic segment spans residues 1 to 9 (MAGVNVCIK). A helical transmembrane segment spans residues 10–33 (CSMFIFNFVFWLCGAIILSVAISI). Topologically, residues 34 to 57 (RAGKIGQEILAPGDADLNLFIAVN) are extracellular. A helical membrane pass occupies residues 58–72 (ILIFVGAVIMILGFL). Topologically, residues 73 to 83 (GCCGAMKENQF) are cytoplasmic. A helical transmembrane segment spans residues 84-109 (MMILFFVGLLMILLLQVAAGIVATTR). At 110–206 (KSKTEQALNK…ASISQMFSKR (97 aa)) the chain is on the extracellular side. Residue Asn-118 is glycosylated (N-linked (GlcNAc...) asparagine). Residues 207-231 (LFIVLALAFGLAAIEVLGLIFSIVL) form a helical membrane-spanning segment. At 232-238 (YCQMRKK) the chain is on the cytoplasmic side.

Belongs to the tetraspanin (TM4SF) family. As to quaternary structure, forms homooligomers. Interacts with MEP1B. Interacts with integrin alpha3/ITGA3. Interacts with RICTOR and MTOR. Interacts with ADAM17. Interacts with ECE1.

It localises to the cell membrane. Its function is as follows. Structural component of specialized membrane microdomains known as tetraspanin-enriched microdomains (TERMs), which act as platforms for receptor clustering and signaling. Participates thereby in diverse biological functions such as cell signal transduction, migration and protein trafficking. Promotes ADAM17-mediated TNF-alpha processing through recruitment of ADAM17 to tetraspanin-enriched micro-domains (TEMs). Forms a complex with RICTOR and integrin alpha3/ITGA3 to mediate mTORC2 activation and AKT1 phosphorylation leading to cell migration. Reduces apoptosis and autophagy induced by high glucose levels through forming a complex with mTOR and RICTOR. Contributes to the maintenance of intestinal epithelial barrier and plays a role in the regulation of intestine inflammation by switching interferon gamma receptor 1/IFNGR1 from clathrin-dependent to lipid raft-dependent endocytosis route to limit STAT1 activation magnitude and duration. Acts as a modulator of the endothelin axis by associating with endothelin converting enzyme ECE1 and regulating its activity of conversion of the endothelin-1 precursor to endothelin. The sequence is that of Tetraspanin-8 (TSPAN8) from Bos taurus (Bovine).